We begin with the raw amino-acid sequence, 291 residues long: 3-hydroxy-5-phosphonooxypentane-2,4-dione thiolase (291 aa).

Lys-203 acts as the Schiff-base intermediate with substrate in catalysis.

Belongs to the DeoC/FbaB aldolase family. Homodecamer.

Its subcellular location is the cytoplasm. It catalyses the reaction dihydroxyacetone phosphate + acetyl-CoA = 3-hydroxy-2,4-dioxopentyl phosphate + CoA. Functionally, involved in the degradation of phospho-AI-2, thereby terminating induction of the lsr operon and closing the AI-2 signaling cycle. Catalyzes the transfer of an acetyl moiety from 3-hydroxy-5-phosphonooxypentane-2,4-dione to CoA to form glycerone phosphate and acetyl-CoA. This Escherichia coli O139:H28 (strain E24377A / ETEC) protein is 3-hydroxy-5-phosphonooxypentane-2,4-dione thiolase.